The following is a 442-amino-acid chain: UDP-N-acetylmuramoylalanine--D-glutamate ligase (442 aa).

113–119 serves as a coordination point for ATP; the sequence is GSNGKTT.

It belongs to the MurCDEF family.

It is found in the cytoplasm. It carries out the reaction UDP-N-acetyl-alpha-D-muramoyl-L-alanine + D-glutamate + ATP = UDP-N-acetyl-alpha-D-muramoyl-L-alanyl-D-glutamate + ADP + phosphate + H(+). It participates in cell wall biogenesis; peptidoglycan biosynthesis. In terms of biological role, cell wall formation. Catalyzes the addition of glutamate to the nucleotide precursor UDP-N-acetylmuramoyl-L-alanine (UMA). The polypeptide is UDP-N-acetylmuramoylalanine--D-glutamate ligase (Coxiella burnetii (strain CbuK_Q154) (Coxiella burnetii (strain Q154))).